The primary structure comprises 353 residues: Melanin-concentrating hormone receptor 1 (353 aa).

The interval 1-31 (MDLEASLLPTGPNTSNTSDGPDNLTSAGSPP) is disordered. Residues 1-45 (MDLEASLLPTGPNTSNTSDGPDNLTSAGSPPRSGSVSYINIIMPS) are Extracellular-facing. The segment covering 11 to 31 (GPNTSNTSDGPDNLTSAGSPP) has biased composition (polar residues). N-linked (GlcNAc...) asparagine glycans are attached at residues Asn-13, Asn-16, and Asn-23. A helical transmembrane segment spans residues 46 to 66 (VFGTICLLGIIGNSMVIFAVV). Residues 67 to 79 (KKSKLHWCNNVPD) are Cytoplasmic-facing. Residues 80 to 100 (IFIINLSVVDLLFLLGMPFMI) form a helical membrane-spanning segment. Over 101-118 (HQLMGNGVWHFGETMCTL) the chain is Extracellular. A disulfide bridge connects residues Cys-116 and Cys-194. Residues 119–139 (ITAMDANSQFTSTYILTAMAI) form a helical membrane-spanning segment. Residues 140-161 (DRYLATVHPISSTKFRKPSVAT) lie on the Cytoplasmic side of the membrane. A helical transmembrane segment spans residues 162–182 (LVICLLWALSFISITPVWLYA). Over 183–204 (RLIPFPGGAVGCGIRLPNPDTD) the chain is Extracellular. A helical membrane pass occupies residues 205-225 (LYWFTLYQFFLAFALPFVVIT). Over 226–257 (AAYVRILQRMTSSVAPASQRSIRLRTKRVTRT) the chain is Cytoplasmic. Residues 258–278 (AIAICLVFFVCWAPYYVLQLT) form a helical membrane-spanning segment. Topologically, residues 279 to 294 (QLSISRPTLTFVYLYN) are extracellular. Residues 295–315 (AAISLGYANSCLNPFVYIVLC) form a helical membrane-spanning segment. Over 316–353 (ETFRKRLVLSVKPAAQGQLRAVSNAQTADEERTESKGT) the chain is Cytoplasmic.

This sequence belongs to the G-protein coupled receptor 1 family. In terms of assembly, interacts with NCDN.

The protein localises to the cell membrane. Functionally, receptor for melanin-concentrating hormone, coupled to both G proteins that inhibit adenylyl cyclase and G proteins that activate phosphoinositide hydrolysis. The chain is Melanin-concentrating hormone receptor 1 from Macaca mulatta (Rhesus macaque).